The primary structure comprises 306 residues: tRNA dimethylallyltransferase (306 aa).

ATP is bound at residue 11–18; that stretch reads APTAAGKT. A substrate-binding site is contributed by 13–18; sequence TAAGKT.

It belongs to the IPP transferase family. Monomer. Mg(2+) is required as a cofactor.

The enzyme catalyses adenosine(37) in tRNA + dimethylallyl diphosphate = N(6)-dimethylallyladenosine(37) in tRNA + diphosphate. Its function is as follows. Catalyzes the transfer of a dimethylallyl group onto the adenine at position 37 in tRNAs that read codons beginning with uridine, leading to the formation of N6-(dimethylallyl)adenosine (i(6)A). This Deinococcus radiodurans (strain ATCC 13939 / DSM 20539 / JCM 16871 / CCUG 27074 / LMG 4051 / NBRC 15346 / NCIMB 9279 / VKM B-1422 / R1) protein is tRNA dimethylallyltransferase.